The chain runs to 652 residues: Carboxypeptidase Z (652 aa).

Positions 1–18 (MPPPLPLLLLTVLVVAAA) are cleaved as a signal peptide. In terms of domain architecture, FZ spans 27-160 (NPAGECHRPP…TREDEGCYDP (134 aa)). Intrachain disulfides connect C43-C109, C51-C102, C93-C129, C118-C157, and C122-C146. The Peptidase M14 domain occupies 186-502 (SHHSYAQMVR…ESLLNFVETV (317 aa)). Zn(2+)-binding residues include H248 and E251. N281 is a glycosylation site (N-linked (GlcNAc...) asparagine). H380 provides a ligand contact to Zn(2+). The Proton donor/acceptor role is filled by E472. The segment at 595 to 629 (LRRTGPHDPLGGASSLGEATEPDPLRARRQPSADG) is disordered.

Belongs to the peptidase M14 family. It depends on Zn(2+) as a cofactor. In terms of tissue distribution, in placenta, it is present within invasive trophoblasts and in the surrounding extracellular space. Also present in amnion cells, but is not readily apparent in the extracellular matrix of this cell type. Present in normal pituitary gland and neoplastic pituitary gland (especially POMC-, GH- and PRL-producing adenomas) (at protein level). Widely expressed.

It localises to the secreted. The protein resides in the extracellular space. It is found in the extracellular matrix. Its activity is regulated as follows. Inhibited by 2-mercaptomethyl-3-guanidinoethylthiopropanoic acid (MGTA) and guanidinoethylmercaptosuccinic acid (GEMSA). Inhibited by chelating agents such as EDTA and EGTA. Its function is as follows. Cleaves substrates with C-terminal arginine residues. Probably modulates the Wnt signaling pathway, by cleaving some undefined protein. May play a role in cleavage during prohormone processing. In Homo sapiens (Human), this protein is Carboxypeptidase Z (CPZ).